A 271-amino-acid chain; its full sequence is tRNA pseudouridine synthase A (271 aa).

Asp-52 serves as the catalytic Nucleophile. Tyr-110 is a substrate binding site.

It belongs to the tRNA pseudouridine synthase TruA family. As to quaternary structure, homodimer.

The enzyme catalyses uridine(38/39/40) in tRNA = pseudouridine(38/39/40) in tRNA. Its function is as follows. Formation of pseudouridine at positions 38, 39 and 40 in the anticodon stem and loop of transfer RNAs. This Maridesulfovibrio salexigens (strain ATCC 14822 / DSM 2638 / NCIMB 8403 / VKM B-1763) (Desulfovibrio salexigens) protein is tRNA pseudouridine synthase A.